A 232-amino-acid chain; its full sequence is Lipoprotein-releasing system ATP-binding protein LolD 1 (232 aa).

The ABC transporter domain occupies 11 to 231 (VYLHDVKRQY…SIQDGLVVEL (221 aa)). Residue 47–54 (APSGAGKS) coordinates ATP.

It belongs to the ABC transporter superfamily. Lipoprotein translocase (TC 3.A.1.125) family. The complex is composed of two ATP-binding proteins (LolD) and two transmembrane proteins (LolC and LolE).

The protein localises to the cell inner membrane. Functionally, part of the ABC transporter complex LolCDE involved in the translocation of mature outer membrane-directed lipoproteins, from the inner membrane to the periplasmic chaperone, LolA. Responsible for the formation of the LolA-lipoprotein complex in an ATP-dependent manner. In Rhodopseudomonas palustris (strain BisB18), this protein is Lipoprotein-releasing system ATP-binding protein LolD 1.